The chain runs to 575 residues: Sorting nexin-41 (575 aa).

A disordered region spans residues 30 to 66 (TDGPDDYDFTEPSINGSSDENAQSNAVAEPIEETDEP). Residues 41-55 (PSINGSSDENAQSNA) show a composition bias toward polar residues. Positions 101–221 (QGKNPEVIRI…QKFLNPEYFW (121 aa)) constitute a PX domain. Positions 139, 141, 165, and 188 each coordinate a 1,2-diacyl-sn-glycero-3-phospho-(1D-myo-inositol-3-phosphate). A disordered region spans residues 467–486 (FRSSASPNNKSGSDSISSEV). A compositionally biased stretch (polar residues) spans 469–484 (SSASPNNKSGSDSISS).

It belongs to the sorting nexin family.

The protein resides in the endosome membrane. The protein localises to the endomembrane system. In terms of biological role, may be required for cytoplasm to vacuole transport (Cvt) and pexophagy. In Kluyveromyces lactis (strain ATCC 8585 / CBS 2359 / DSM 70799 / NBRC 1267 / NRRL Y-1140 / WM37) (Yeast), this protein is Sorting nexin-41 (SNX41).